Consider the following 184-residue polypeptide: PLASMODESMATA CALLOSE-BINDING PROTEIN 3 (184 aa).

Positions 1 to 19 are cleaved as a signal peptide; sequence MAVFVLVMILLAMAGHSSG. A disulfide bridge connects residues C22 and C84. The disordered stretch occupies residues 109–146; that stretch reads SGSGTTTPVTTTPSTRVPTTTNTRPYTITPSTGGGLGI. Positions 113–139 are enriched in low complexity; that stretch reads TTTPVTTTPSTRVPTTTNTRPYTITPS. Residue S158 is the site of GPI-anchor amidated serine attachment. A propeptide spans 159-184 (removed in mature form); it reads FGFKLQSPRFGFIVLFTLFLPFYLFS.

In terms of processing, contains two additional disulfide bonds. In terms of tissue distribution, expressed in the shoot apical region and in young leaves but also detected in the laminar and vasculature of mature leaves.

It is found in the cell membrane. Its subcellular location is the cell junction. It localises to the plasmodesma. This Arabidopsis thaliana (Mouse-ear cress) protein is PLASMODESMATA CALLOSE-BINDING PROTEIN 3 (PDCB3).